Consider the following 94-residue polypeptide: Co-chaperonin GroES (94 aa).

It belongs to the GroES chaperonin family. In terms of assembly, heptamer of 7 subunits arranged in a ring. Interacts with the chaperonin GroEL.

The protein localises to the cytoplasm. Functionally, together with the chaperonin GroEL, plays an essential role in assisting protein folding. The GroEL-GroES system forms a nano-cage that allows encapsulation of the non-native substrate proteins and provides a physical environment optimized to promote and accelerate protein folding. GroES binds to the apical surface of the GroEL ring, thereby capping the opening of the GroEL channel. The polypeptide is Co-chaperonin GroES (Bacillus cereus (strain ATCC 14579 / DSM 31 / CCUG 7414 / JCM 2152 / NBRC 15305 / NCIMB 9373 / NCTC 2599 / NRRL B-3711)).